The chain runs to 546 residues: MGLICGLAIASGLTVTIPSEAQTISVNEFFPPVNRYQLGASNLGNGVNQVTSVAELRDVQPSDWAFAALQSLVERYGCLVGYPDRTYRGDAEGTLRARPLSRYEFAAGLNACLNTIEQLLQENVSVAQGDLDLLKKLAQDFQAELKQLAVRVDNLETRTAFLEDHQFSVTTKLYGQTITSLDKVFGDRVGGGSNEFQTQFAYRVRFNLETSFTGKDLFRTRLQFSNFLNGVEQTGTNMTRFNYDDNSNNNVEVSHLWYRTPLTDNLTLRLGTVGVGYTDLVDTLTPPTIADDALGIPSRFGEYDPVYRRGGGGAGFNWQITPTVQLSVGYLATNPNDPDPGNGLFNGGYHTLAQLAYQTADGGIGFTYSRSYFPAGNTDLMAGTGSLLAIQPFGEVIATAGNFYTLQGYYRITPHVQIHGWGGFVEAQAQGGGLSNLSNGVGGTVLRDVSWNSSAIWYGLVGISFPDVGGEGNLPGIALGIPPTVTASNLPGAVGQTTPYHLEAFYRIQLNDNISITPGFWVVLNPEANSNNATQYVGHIRTSFLF.

The SLH domain occupies 52–123 (SVAELRDVQP…NTIEQLLQEN (72 aa)).

It belongs to the OprB family.

This is an uncharacterized protein from Synechocystis sp. (strain ATCC 27184 / PCC 6803 / Kazusa).